The sequence spans 204 residues: Methylthioribulose-1-phosphate dehydratase (204 aa).

Residues His-94 and His-96 each contribute to the Zn(2+) site.

This sequence belongs to the aldolase class II family. MtnB subfamily. Requires Zn(2+) as cofactor.

The enzyme catalyses 5-(methylsulfanyl)-D-ribulose 1-phosphate = 5-methylsulfanyl-2,3-dioxopentyl phosphate + H2O. It participates in amino-acid biosynthesis; L-methionine biosynthesis via salvage pathway; L-methionine from S-methyl-5-thio-alpha-D-ribose 1-phosphate: step 2/6. In terms of biological role, catalyzes the dehydration of methylthioribulose-1-phosphate (MTRu-1-P) into 2,3-diketo-5-methylthiopentyl-1-phosphate (DK-MTP-1-P). This is Methylthioribulose-1-phosphate dehydratase from Pseudomonas syringae pv. tomato (strain ATCC BAA-871 / DC3000).